Here is a 130-residue protein sequence, read N- to C-terminus: Small ribosomal subunit protein uS9 (130 aa).

It belongs to the universal ribosomal protein uS9 family.

The protein is Small ribosomal subunit protein uS9 of Burkholderia thailandensis (strain ATCC 700388 / DSM 13276 / CCUG 48851 / CIP 106301 / E264).